Consider the following 1330-residue polypeptide: MATEIGSPPRFFHMPRFQHQAPRQLFYKRPDFAQQQAMQQLTFDGKRMRKAVNRKTIDYNPSVIKYLENRIWQRDQRDMRAIQPDAGYYNDLVPPIGMLNNPMNAVTTKFVRTSTNKVKCPVFVVRWTPEGRRLVTGASSGEFTLWNGLTFNFETILQAHDSPVRAMTWSHNDMWMLTADHGGYVKYWQSNMNNVKMFQAHKEAIREASFSPTDNKFATCSDDGTVRIWDFLRCHEERILRGHGADVKCVDWHPTKGLVVSGSKDSQQPIKFWDPKTGQSLATLHAHKNTVMEVKLNLNGNWLLTASRDHLCKLFDIRNLKEELQVFRGHKKEATAVAWHPVHEGLFASGGSDGSLLFWHVGVEKEVGGMEMAHEGMIWSLAWHPLGHILCSGSNDHTSKFWTRNRPGDKMRDRYNLNLLPGMSEDGVEYDDLEPNSLAVIPGMGIPEQLKLAMEQEQMGKDESSEIEMTIPGLDWGMEEVMQKDQKKVPQKKVPYAKPIPAQFQQAWMQNKVPIPAPNEVLNDRKEDIKLEEKKKTQAEIEQEMATLQYTNPQLLEQLKIERLAQKQADQIQPPPSSGTPLLGPQPFSGQGPISQIPQGFQQPHPSQQMPLVPQMGPPGPQGQFRAPGPQGQMGPQGPPMHQGGGGPQGFMGPQGPQGPPQGLPRPQDMHGPQGMQRHPGPHGPLGPQGPPGPQGSSGPQGHMGPQGPPGPQGHIGPQGPPASQGHMGPQGPPGTQGMQGPPGPRGMQGPPHPHGIQGGPASQGIQGPLMGLNPRGMQGPPGPRENQGPAPQGLMIGHPPQEMRGPHPPSGLLGHGPQEMRGPQEMRGMQGPPPQGSMLGPPQELRGPSGSQGQQGPPQGSLGPPPQGGMQGPPGPQGQQNPARGPHPSQGPIPFQQQKAPLLGDGPRAPFNQEGQSTGPPPLIPGLGQQGAQGRIPPLNPGQGPGPNKGDTRGPPNHHLGPMSERRHEQSGGPEHGPDRGPFRGGQDCRGPPDRRGSHPDFPDDFRPDDFHPDKRFGHRLREFEGRGGPLPQEEKWRRGGPGPPFPPDHREFNEGDGRGAARGPPGAWEGRRPGDDRFPRDPDDPRFRGRREESFRRGAPPRHEGRAPPRGRDNFPGPDDFGPEEGFDASDEAARGRDLRGRGRGTPRGGSRKCLLPTPDEFPRFEGGRKPDSWDGNREPGPGHEHFRDAPRPDHPPHDGHSPASRERSSSLQGMDMASLPPRKRPWHDGSGTSEHREMEAQGGPSEDRGSKGRGGPGPSQRVPKSGRSSSLDGDHHDGYHRDEPFGGPPGSSSSSRGARSGSNWGRGSNMNSGPPRRGTSRGSGRGR.

The residue at position 2 (alanine 2) is an N-acetylalanine. Serine 7 is subject to Phosphoserine. N6-acetyllysine is present on lysine 46. WD repeat units follow at residues 117–156 (KVKC…FETI), 159–198 (AHDS…VKMF), 200–239 (AHKE…EERI), 242–283 (GHGA…SLAT), 286–325 (AHKN…EELQ), 329–369 (GHKK…EVGG), and 373–412 (AHEG…DKMR). Glycyl lysine isopeptide (Lys-Gly) (interchain with G-Cter in SUMO2) cross-links involve residues lysine 526, lysine 530, and lysine 560. The tract at residues 566–1330 (QKQADQIQPP…GTSRGSGRGR (765 aa)) is disordered. A compositionally biased stretch (polar residues) spans 588-607 (FSGQGPISQIPQGFQQPHPS). A Collagen-like domain is found at 617 to 769 (GPPGPQGQFR…GPASQGIQGP (153 aa)). Residues 622–642 (QGQFRAPGPQGQMGPQGPPMH) show a composition bias toward low complexity. Residues 682-694 (PHGPLGPQGPPGP) are compositionally biased toward pro residues. Composition is skewed to low complexity over residues 695–706 (QGSSGPQGHMGP) and 725–750 (QGHM…GMQG). Omega-N-methylarginine is present on arginine 776. Positions 848 to 863 (GPSGSQGQQGPPQGSL) are enriched in low complexity. An Asymmetric dimethylarginine modification is found at arginine 909. Residues 926–935 (PGLGQQGAQG) show a composition bias toward low complexity. Basic and acidic residues-rich tracts occupy residues 965 to 983 (SERR…DRGP) and 992 to 1027 (GPPD…EFEG). Arginine 981 is modified (omega-N-methylarginine). Position 1028 is an omega-N-methylarginine (arginine 1028). Basic and acidic residues-rich tracts occupy residues 1049–1061 (PDHR…DGRG) and 1071–1115 (EGRR…RGRD). Positions 1123-1133 (FGPEEGFDASD) are enriched in acidic residues. Composition is skewed to basic and acidic residues over residues 1134 to 1143 (EAARGRDLRG), 1163 to 1211 (EFPR…RERS), and 1236 to 1253 (SEHR…DRGS). Phosphoserine is present on serine 1204. Arginine 1256 bears the Omega-N-methylarginine mark. Positions 1275–1287 (DGDHHDGYHRDEP) are enriched in basic and acidic residues. Positions 1293–1323 (GSSSSSRGARSGSNWGRGSNMNSGPPRRGTS) are enriched in low complexity. At arginine 1309 the chain carries Asymmetric dimethylarginine; alternate. Arginine 1309 carries the post-translational modification Omega-N-methylarginine; alternate.

The protein belongs to the WD repeat WDR33 family. As to quaternary structure, component of the cleavage and polyadenylation specificity factor (CPSF) module of the pre-mRNA 3'-end processing complex. Interacts with CPSF3/CPSF73. In terms of tissue distribution, most highly expressed in testis.

It is found in the nucleus. Its function is as follows. Essential for both cleavage and polyadenylation of pre-mRNA 3' ends. This Mus musculus (Mouse) protein is pre-mRNA 3' end processing protein WDR33 (Wdr33).